The primary structure comprises 170 residues: Crossover junction endodeoxyribonuclease RuvC (170 aa).

Residues aspartate 11, glutamate 71, and aspartate 143 contribute to the active site. Mg(2+) contacts are provided by aspartate 11, glutamate 71, and aspartate 143.

This sequence belongs to the RuvC family. In terms of assembly, homodimer which binds Holliday junction (HJ) DNA. The HJ becomes 2-fold symmetrical on binding to RuvC with unstacked arms; it has a different conformation from HJ DNA in complex with RuvA. In the full resolvosome a probable DNA-RuvA(4)-RuvB(12)-RuvC(2) complex forms which resolves the HJ. Mg(2+) is required as a cofactor.

The protein resides in the cytoplasm. It carries out the reaction Endonucleolytic cleavage at a junction such as a reciprocal single-stranded crossover between two homologous DNA duplexes (Holliday junction).. In terms of biological role, the RuvA-RuvB-RuvC complex processes Holliday junction (HJ) DNA during genetic recombination and DNA repair. Endonuclease that resolves HJ intermediates. Cleaves cruciform DNA by making single-stranded nicks across the HJ at symmetrical positions within the homologous arms, yielding a 5'-phosphate and a 3'-hydroxyl group; requires a central core of homology in the junction. The consensus cleavage sequence is 5'-(A/T)TT(C/G)-3'. Cleavage occurs on the 3'-side of the TT dinucleotide at the point of strand exchange. HJ branch migration catalyzed by RuvA-RuvB allows RuvC to scan DNA until it finds its consensus sequence, where it cleaves and resolves the cruciform DNA. This chain is Crossover junction endodeoxyribonuclease RuvC, found in Rhizobium meliloti (strain 1021) (Ensifer meliloti).